A 281-amino-acid polypeptide reads, in one-letter code: Small ribosomal subunit protein uS2 (281 aa).

The interval 233 to 281 (NKAEGEAAEQPMAAWEKELLTNEAPAEASAEAAAPAAAEGETAEAPKAE) is disordered. Over residues 255–275 (EAPAEASAEAAAPAAAEGETA) the composition is skewed to low complexity.

Belongs to the universal ribosomal protein uS2 family.

This is Small ribosomal subunit protein uS2 from Bifidobacterium longum (strain DJO10A).